Reading from the N-terminus, the 358-residue chain is MPNKKISVLLVDDSAVVRQVLVAILNDTPDIHVMGAATDPIFAMAKLAQEWPDVIVLDVEMPRMDGITFLKKIMSERPTPVVICSSLTQKGAETSLQALSAGAVEIITKPTTGLKNFLIDSAAELVAAVRAAANSNVKNLGKRMAPPVLAPASKLTADAILPAASGHAMAQTTERIVAIGTSTGGTQALEAVLTALPRVCPGMVIVQHMPEKFTASFAERLNGLSQIEVPEARNNDRILPGLALIAPGGKHMMVTRSGASYYVQVIDGPLVNRHRPSVDVLFRSVAKFAGKNATGIIMTGMGDDGARGLKEMLDAGSSTVAQDEASCVVFGMPKEAIKLNAAQRIMPLQEIHQAILHR.

The Response regulatory domain maps to 7–124; the sequence is SVLLVDDSAV…KNFLIDSAAE (118 aa). Aspartate 58 carries the 4-aspartylphosphate modification. The CheB-type methylesterase domain maps to 170–358; it reads AQTTERIVAI…QEIHQAILHR (189 aa). Residues serine 182, histidine 208, and aspartate 304 contribute to the active site.

It belongs to the CheB family. Phosphorylated by CheA. Phosphorylation of the N-terminal regulatory domain activates the methylesterase activity.

It localises to the cytoplasm. The enzyme catalyses [protein]-L-glutamate 5-O-methyl ester + H2O = L-glutamyl-[protein] + methanol + H(+). It carries out the reaction L-glutaminyl-[protein] + H2O = L-glutamyl-[protein] + NH4(+). Functionally, involved in chemotaxis. Part of a chemotaxis signal transduction system that modulates chemotaxis in response to various stimuli. Catalyzes the demethylation of specific methylglutamate residues introduced into the chemoreceptors (methyl-accepting chemotaxis proteins or MCP) by CheR. Also mediates the irreversible deamidation of specific glutamine residues to glutamic acid. This is Protein-glutamate methylesterase/protein-glutamine glutaminase 1 from Pseudomonas savastanoi pv. phaseolicola (strain 1448A / Race 6) (Pseudomonas syringae pv. phaseolicola (strain 1448A / Race 6)).